The following is a 633-amino-acid chain: Basic helix-loop-helix ARNT-like protein 1 (633 aa).

The segment at 1 to 65 (MADQRMDISS…GMDTDKDDQH (65 aa)) is disordered. S17 is subject to Phosphoserine; by GSK3-beta. Residues 24-33 (ISSSLSTSGV) show a composition bias toward polar residues. The Nuclear localization signal motif lies at 36–41 (NRKRKG). Positions 79–132 (NAREAHSQIEKRRRDKMNSFIDELASLVPTCNAMSRKLDKLTVLRMAVQHMKTL) constitute a bHLH domain. S85 bears the Phosphoserine mark. S97 is subject to Phosphoserine; by CK2. The Nuclear export signal 1 signature appears at 149–159 (LSDDELKHLIL). The PAS 1 domain occupies 150–222 (SDDELKHLIL…EQLSSSDTAP (73 aa)). Residue K259 forms a Glycyl lysine isopeptide (Lys-Gly) (interchain with G-Cter in SUMO2 and SUMO3) linkage. K266 is covalently cross-linked (Glycyl lysine isopeptide (Lys-Gly) (interchain with G-Cter in SUMO)). A PAS 2 domain is found at 333-403 (PQPVNGEIRV…ECHRQVLQTR (71 aa)). A Nuclear export signal 2 motif is present at residues 368-376 (LAYLPQELL). The region spanning 408–451 (TNCYKFKIKDGSFITLRSRWFSFMNPWTKEVEYIVSTNTVVSTS) is the PAC domain. Disordered stretches follow at residues 469–499 (SMDS…RAGA) and 518–578 (GSSP…DNSS). Residues 518 to 528 (GSSPSSCGSSP) show a composition bias toward low complexity. K545 bears the N6-acetyllysine mark. The span at 563-578 (GQIQDSSGYPYSDNSS) shows a compositional bias: polar residues.

As to quaternary structure, component of the circadian clock oscillator which includes the CRY1/2 proteins, CLOCK or NPAS2, BMAL1 or BMAL2, CSNK1D and/or CSNK1E, TIMELESS and the PER1/2/3 proteins. Forms a heterodimer with CLOCK. The CLOCK-BMAL1 heterodimer is required for E-box-dependent transactivation, for CLOCK nuclear translocation and degradation, and, for phosphorylation of both CLOCK and BMAL1. Interacts with PER1, PER2, CRY1 and CRY2 and this interaction requires a translocation to the nucleus. Interaction of the CLOCK-BMAL1 heterodimer with PER or CRY inhibits transcription activation. Interacts with NPAS2. Post-translationally, ubiquitinated, leading to its proteasomal degradation. Deubiquitinated by USP9X. O-glycosylated; contains O-GlcNAc. O-glycosylation by OGT prevents protein degradation by inhibiting ubiquitination. It also stabilizes the CLOCK-BMAL1 heterodimer thereby increasing CLOCK-BMAL1-mediated transcription of genes in the negative loop of the circadian clock such as PER1/2/3 and CRY1/2. In terms of processing, acetylated on Lys-545 by CLOCK during the repression phase of the circadian cycle. Acetylation facilitates recruitment of CRY1 protein and initiates the repression phase of the circadian cycle. Acetylated at Lys-545 by KAT5 during the activation phase of the cycle, leading to recruitment of the positive transcription elongation factor b (P-TEFb) and BRD4, followed by productive elongation of circadian transcripts. Deacetylated by SIRT1, which may result in decreased protein stability. Post-translationally, phosphorylated upon dimerization with CLOCK. Phosphorylation enhances the transcriptional activity, alters the subcellular localization and decreases the stability of the CLOCK-BMAL1 heterodimer by promoting its degradation. Phosphorylation shows circadian variations in the liver with a peak between CT10 to CT14. Phosphorylation at Ser-97 by CK2 is essential for its nuclear localization, its interaction with CLOCK and controls CLOCK nuclear entry. Dephosphorylation at Ser-85 is important for dimerization with CLOCK and transcriptional activity. Sumoylated on Lys-266 upon dimerization with CLOCK. Predominantly conjugated to poly-SUMO2/3 rather than SUMO1 and the level of these conjugates undergo rhythmic variation, peaking at CT9-CT12. Sumoylation localizes it exclusively to the PML body and promotes its ubiquitination in the PML body, ubiquitin-dependent proteasomal degradation and the transcriptional activity of the CLOCK-BMAL1 heterodimer. In terms of processing, undergoes lysosome-mediated degradation in a time-dependent manner in the liver. In terms of tissue distribution, expressed in pineal gland and retina.

The protein resides in the nucleus. Its subcellular location is the cytoplasm. The protein localises to the PML body. In terms of biological role, transcriptional activator which forms a core component of the circadian clock. The circadian clock, an internal time-keeping system, regulates various physiological processes through the generation of approximately 24 hour circadian rhythms in gene expression, which are translated into rhythms in metabolism and behavior. It is derived from the Latin roots 'circa' (about) and 'diem' (day) and acts as an important regulator of a wide array of physiological functions including metabolism, sleep, body temperature, blood pressure, endocrine, immune, cardiovascular, and renal function. Consists of two major components: the central clock, residing in the suprachiasmatic nucleus (SCN) of the brain, and the peripheral clocks that are present in nearly every tissue and organ system. Both the central and peripheral clocks can be reset by environmental cues, also known as Zeitgebers (German for 'timegivers'). The predominant Zeitgeber for the central clock is light, which is sensed by retina and signals directly to the SCN. The central clock entrains the peripheral clocks through neuronal and hormonal signals, body temperature and feeding-related cues, aligning all clocks with the external light/dark cycle. Circadian rhythms allow an organism to achieve temporal homeostasis with its environment at the molecular level by regulating gene expression to create a peak of protein expression once every 24 hours to control when a particular physiological process is most active with respect to the solar day. Transcription and translation of core clock components (CLOCK, NPAS2, BMAL1, BMAL2, PER1, PER2, PER3, CRY1 and CRY2) plays a critical role in rhythm generation, whereas delays imposed by post-translational modifications (PTMs) are important for determining the period (tau) of the rhythms (tau refers to the period of a rhythm and is the length, in time, of one complete cycle). A diurnal rhythm is synchronized with the day/night cycle, while the ultradian and infradian rhythms have a period shorter and longer than 24 hours, respectively. Disruptions in the circadian rhythms contribute to the pathology of cardiovascular diseases, cancer, metabolic syndromes and aging. A transcription/translation feedback loop (TTFL) forms the core of the molecular circadian clock mechanism. Transcription factors, CLOCK or NPAS2 and BMAL1 or BMAL2, form the positive limb of the feedback loop, act in the form of a heterodimer and activate the transcription of core clock genes and clock-controlled genes (involved in key metabolic processes), harboring E-box elements (5'-CACGTG-3') within their promoters. The core clock genes: PER1/2/3 and CRY1/2 which are transcriptional repressors form the negative limb of the feedback loop and interact with the CLOCK|NPAS2-BMAL1|BMAL2 heterodimer inhibiting its activity and thereby negatively regulating their own expression. This heterodimer also activates nuclear receptors NR1D1/2 and RORA/B/G, which form a second feedback loop and which activate and repress BMAL1 transcription, respectively. The preferred binding motif for the CLOCK-BMAL1 heterodimer is 5'-CACGTGA-3', which contains a flanking adenine nucleotide at the 3-prime end of the canonical 6-nucleotide E-box sequence. CLOCK specifically binds to the half-site 5'-CAC-3', while BMAL1 binds to the half-site 5'-GTGA-3'. Essential for the rhythmic interaction of CLOCK with ASS1 and plays a critical role in positively regulating CLOCK-mediated acetylation of ASS1. Plays a role in protecting against lethal sepsis by limiting the expression of immune checkpoint protein CD274 in macrophages in a PKM2-dependent manner. The sequence is that of Basic helix-loop-helix ARNT-like protein 1 (BMAL1) from Gallus gallus (Chicken).